Reading from the N-terminus, the 329-residue chain is Sulfate/thiosulfate import ATP-binding protein CysA (329 aa).

An ABC transporter domain is found at I3–L237. G35–T42 lines the ATP pocket.

It belongs to the ABC transporter superfamily. Sulfate/tungstate importer (TC 3.A.1.6) family. The complex is composed of two ATP-binding proteins (CysA), two transmembrane proteins (CysT and CysW) and a solute-binding protein (CysP).

Its subcellular location is the cell inner membrane. The enzyme catalyses sulfate(out) + ATP + H2O = sulfate(in) + ADP + phosphate + H(+). The catalysed reaction is thiosulfate(out) + ATP + H2O = thiosulfate(in) + ADP + phosphate + H(+). Functionally, part of the ABC transporter complex CysAWTP involved in sulfate/thiosulfate import. Responsible for energy coupling to the transport system. This is Sulfate/thiosulfate import ATP-binding protein CysA from Pseudomonas aeruginosa (strain ATCC 15692 / DSM 22644 / CIP 104116 / JCM 14847 / LMG 12228 / 1C / PRS 101 / PAO1).